The sequence spans 443 residues: Transmembrane protein 184C (443 aa).

The next 7 helical transmembrane spans lie at 15-35 (LVVL…IWKL), 46-66 (AWFI…WGIL), 84-104 (ILWM…YPDI), 182-202 (PVTT…EGDF), 210-230 (YLVI…VLFY), 252-272 (VVFV…AGVI), and 284-304 (VATG…AVAH). Polar residues predominate over residues 369–378 (TSLLSSSTQD). The tract at residues 369–422 (TSLLSSSTQDPISAASSIPPSPSGHYQGFGQTITPQTTPTATTMPEELYSADSP) is disordered. Over residues 399 to 411 (QTITPQTTPTATT) the composition is skewed to low complexity.

The protein belongs to the TMEM184 family.

It is found in the membrane. Functionally, may play a role in cell growth. In Xenopus tropicalis (Western clawed frog), this protein is Transmembrane protein 184C (tmem184c).